A 1744-amino-acid polypeptide reads, in one-letter code: Complement C4-B (1744 aa).

Positions 1-19 (MRLLWGLIWASSFFTLSLQ) are cleaved as a signal peptide. Cys-68 and Cys-97 are joined by a disulfide. Asn-226 carries N-linked (GlcNAc...) asparagine glycosylation. Cys-635 and Cys-669 are joined by a disulfide. The propeptide occupies 676–679 (RKKR). Intrachain disulfides connect Cys-702/Cys-728, Cys-703/Cys-735, and Cys-716/Cys-736. Positions 702–736 (CCQDGVTRLPMMRSCEQRAARVQQPDCREPFLSCC) constitute an Anaphylatoxin-like domain. N-linked (GlcNAc...) asparagine glycosylation is present at Asn-862. Ser-918 is subject to Phosphoserine. Residues 1010–1013 (CGEQ) constitute a cross-link (isoglutamyl cysteine thioester (Cys-Gln)). Residues Asn-1328 and Asn-1391 are each glycosylated (N-linked (GlcNAc...) asparagine). A sulfotyrosine mark is found at Tyr-1417, Tyr-1420, and Tyr-1422. A propeptide spanning residues 1447-1453 (RRNRRRR) is cleaved from the precursor. 5 disulfide bridges follow: Cys-1471/Cys-1535, Cys-1583/Cys-1588, Cys-1595/Cys-1673, Cys-1618/Cys-1742, and Cys-1718/Cys-1727. Residues 1595–1742 (CPRQRRALER…FLQEYGTQGC (148 aa)) form the NTR domain.

As to quaternary structure, in absence of complement activation, circulates in blood as a disulfide-linked trimer of an alpha, beta and gamma chain. Complement C4b is composed of complement C4b-A, complement C4 beta and complement C4 gamma chains that are associated via disulfide bonds. Non-enzymatic component of the C3 convertase, also named C4bC2b, composed of the serine protease complement C2b (C2), as well as complement C4b. Non-enzymatic component of the C5 convertase, also named C4bC2bC3b, composed of the serine protease complement C2b (C2), complement C3b, as well as complement C4b. Interacts with CR1 (via Sushi 1 and Sushi 2 domains). In terms of assembly, (Microbial infection) Binds B.burgdorferi OspC, the interaction is inhibited by complement factor C2. This binding may inhibit the complement cascade and allow the bacteria to survive in the host bloodstream. Post-translationally, prior to secretion, the single-chain precursor is enzymatically cleaved by plasminogen (PLG) to yield non-identical chains alpha, beta and gamma. During activation of the complement systems, the alpha chain is cleaved into C4a and C4b by different proteases depending on the complement pathway: C4b stays linked to the beta and gamma chains, while C4a is released in the plasma. The alpha chain is cleaved by C1S to generate C4a and C4b following activation by the classical complement system. The alpha chain is cleaved to generate C4a and C4b by MASP2 following activation by the lectin complement system. The alpha chain is cleaved by GZMK to generate C4a and C4b following activation by the GZMK complement system. Further degradation of C4b by C1 into the inactive fragments C4c and C4d blocks the generation of C3 convertase. The proteolytic cleavages often are incomplete so that many structural forms can be found in plasma. Upon activation, the internal thioester bond reacts with carbohydrate antigens on the target surface to form amide or ester bonds, leading to covalent association with the surface of pathogens. In terms of processing, complement C4b interacts with complement C3b via a thioester linkage. Post-translationally, N- and O-glycosylated. O-glycosylated with a core 1 or possibly core 8 glycan. Complement component C4 is expressed at highest levels in the liver, at moderate levels in the adrenal cortex, adrenal medulla, thyroid gland, and the kidney, and at lowest levels in the heart, ovary, small intestine, thymus, pancreas and spleen. The extra-hepatic sites of expression may be important for the local protection and inflammatory response.

It localises to the secreted. It is found in the synapse. Its subcellular location is the cell projection. The protein localises to the axon. The protein resides in the dendrite. It localises to the cell surface. Functionally, precursor of non-enzymatic components of the classical, lectin and GZMK complement pathways, which consist in a cascade of proteins that leads to phagocytosis and breakdown of pathogens and signaling that strengthens the adaptive immune system. Non-enzymatic component of C3 and C5 convertases. Generated following cleavage by complement proteases (C1S, MASP2 or GZMK, depending on the complement pathway), it covalently attaches to the surface of pathogens, where it acts as an opsonin that marks the surface of antigens for removal. It then recruits the serine protease complement C2b to form the C3 and C5 convertases, which cleave and activate C3 and C5, respectively, the next components of the complement pathways. Complement C4b-B isotype catalyzes the transacylation of the thioester carbonyl group to form ester bonds with carbohydrate antigens, while C4b-A isotype is responsible for effective binding to form amide bonds with immune aggregates or protein antigens. In terms of biological role, putative humoral mediator released following cleavage by complement proteases (C1S, MASP2 or GZMK, depending on the complement pathway). While it is strongly similar to anaphylatoxins, its role is unclear. Was reported to act as a mediator of local inflammatory process; however these effects were probably due to contamination with C3a and/C5a anaphylatoxins in biological assays. The sequence is that of Complement C4-B from Homo sapiens (Human).